The primary structure comprises 445 residues: Phosphoglucosamine mutase (445 aa).

Ser-102 functions as the Phosphoserine intermediate in the catalytic mechanism. Residues Ser-102, Asp-241, Asp-243, and Asp-245 each contribute to the Mg(2+) site. Position 102 is a phosphoserine (Ser-102).

The protein belongs to the phosphohexose mutase family. The cofactor is Mg(2+). Activated by phosphorylation.

It carries out the reaction alpha-D-glucosamine 1-phosphate = D-glucosamine 6-phosphate. Catalyzes the conversion of glucosamine-6-phosphate to glucosamine-1-phosphate. The chain is Phosphoglucosamine mutase from Shigella boydii serotype 4 (strain Sb227).